A 371-amino-acid chain; its full sequence is 4-hydroxy-3-methylbut-2-en-1-yl diphosphate synthase (flavodoxin) (371 aa).

[4Fe-4S] cluster is bound by residues C268, C271, C303, and E310.

Belongs to the IspG family. The cofactor is [4Fe-4S] cluster.

It carries out the reaction (2E)-4-hydroxy-3-methylbut-2-enyl diphosphate + oxidized [flavodoxin] + H2O + 2 H(+) = 2-C-methyl-D-erythritol 2,4-cyclic diphosphate + reduced [flavodoxin]. The protein operates within isoprenoid biosynthesis; isopentenyl diphosphate biosynthesis via DXP pathway; isopentenyl diphosphate from 1-deoxy-D-xylulose 5-phosphate: step 5/6. Its function is as follows. Converts 2C-methyl-D-erythritol 2,4-cyclodiphosphate (ME-2,4cPP) into 1-hydroxy-2-methyl-2-(E)-butenyl 4-diphosphate. In Lysinibacillus sphaericus (strain C3-41), this protein is 4-hydroxy-3-methylbut-2-en-1-yl diphosphate synthase (flavodoxin).